Here is a 642-residue protein sequence, read N- to C-terminus: Threonine--tRNA ligase (642 aa).

Residues 1 to 61 (MPAITLPDGS…AADAQVVFVT (61 aa)) enclose the TGS domain. Positions 243-536 (DHRRLGKEMD…LIEQYAGRFP (294 aa)) are catalytic. Cysteine 336, histidine 387, and histidine 513 together coordinate Zn(2+).

It belongs to the class-II aminoacyl-tRNA synthetase family. As to quaternary structure, homodimer. Zn(2+) is required as a cofactor.

It localises to the cytoplasm. The enzyme catalyses tRNA(Thr) + L-threonine + ATP = L-threonyl-tRNA(Thr) + AMP + diphosphate + H(+). Its function is as follows. Catalyzes the attachment of threonine to tRNA(Thr) in a two-step reaction: L-threonine is first activated by ATP to form Thr-AMP and then transferred to the acceptor end of tRNA(Thr). Also edits incorrectly charged L-seryl-tRNA(Thr). This Granulibacter bethesdensis (strain ATCC BAA-1260 / CGDNIH1) protein is Threonine--tRNA ligase.